A 392-amino-acid polypeptide reads, in one-letter code: Putative RNA-binding protein Luc7-like 2 (392 aa).

Position 18 is a phosphoserine (serine 18). Residues 102-177 (EVAKKRLAET…EAEEVYRNSM (76 aa)) are a coiled coil. Basic and acidic residues predominate over residues 235-257 (KQEKRNQERLKRREEREREEREK). The segment at 235 to 392 (KQEKRNQERL…SSEEREAGEI (158 aa)) is disordered. The span at 258–321 (LRRSRSHSKN…RSRSHQRSRH (64 aa)) shows a compositional bias: basic residues. 5-hydroxylysine; by JMJD6 occurs at positions 266 and 269. 2 stretches are compositionally biased toward basic and acidic residues: residues 337–364 (KERF…DRDR) and 377–392 (RSED…AGEI).

It belongs to the Luc7 family. As to quaternary structure, interacts with SCNM1.

It localises to the nucleus speckle. It is found in the nucleus. The protein localises to the nucleoplasm. Functionally, may bind to RNA via its Arg/Ser-rich domain. The protein is Putative RNA-binding protein Luc7-like 2 (LUC7L2) of Homo sapiens (Human).